A 291-amino-acid polypeptide reads, in one-letter code: Small ribosomal subunit biogenesis GTPase RsgA 2 (291 aa).

The region spanning 63–221 is the CP-type G domain; sequence ENALVRPPVA…VADTPGFSSI (159 aa). GTP-binding positions include 112 to 115 and 164 to 172; these read SKMD and GQSGVGKST. Positions 245, 250, 252, and 258 each coordinate Zn(2+).

It belongs to the TRAFAC class YlqF/YawG GTPase family. RsgA subfamily. In terms of assembly, monomer. Associates with 30S ribosomal subunit, binds 16S rRNA. Zn(2+) serves as cofactor.

It localises to the cytoplasm. In terms of biological role, one of several proteins that assist in the late maturation steps of the functional core of the 30S ribosomal subunit. Helps release RbfA from mature subunits. May play a role in the assembly of ribosomal proteins into the subunit. Circularly permuted GTPase that catalyzes slow GTP hydrolysis, GTPase activity is stimulated by the 30S ribosomal subunit. This is Small ribosomal subunit biogenesis GTPase RsgA 2 from Listeria monocytogenes serovar 1/2a (strain ATCC BAA-679 / EGD-e).